We begin with the raw amino-acid sequence, 126 residues long: Flagellar protein FliT (126 aa).

The interval 1-50 is required for homodimerization; that stretch reads MVSPHRLLKDYQQLLSLSQKILHLAISGQWDTLVEQEIVYVQSVEGLVNT. The interval 60–98 is fliD binding; it reads MRLHLRQILQEVMDNEAKVKQLLQKRMDELSSLMGQSLK.

The protein belongs to the FliT family. Homodimer. Interacts with FliD and FlhC.

The protein localises to the cytoplasm. It localises to the cytosol. Its function is as follows. Dual-function protein that regulates the transcription of class 2 flagellar operons and that also acts as an export chaperone for the filament-capping protein FliD. As a transcriptional regulator, acts as an anti-FlhDC factor; it directly binds FlhC, thus inhibiting the binding of the FlhC/FlhD complex to class 2 promoters, resulting in decreased expression of class 2 flagellar operons. As a chaperone, effects FliD transition to the membrane by preventing its premature polymerization, and by directing it to the export apparatus. The protein is Flagellar protein FliT of Pectobacterium atrosepticum (strain SCRI 1043 / ATCC BAA-672) (Erwinia carotovora subsp. atroseptica).